We begin with the raw amino-acid sequence, 378 residues long: Outer membrane porin C (378 aa).

The N-terminal stretch at M1–A21 is a signal peptide.

It belongs to the Gram-negative porin family. Homotrimer.

Its subcellular location is the cell outer membrane. Functionally, forms pores that allow passive diffusion of small molecules across the outer membrane. The chain is Outer membrane porin C (ompC) from Salmonella typhimurium (strain LT2 / SGSC1412 / ATCC 700720).